The chain runs to 354 residues: Nicotinate-nucleotide--dimethylbenzimidazole phosphoribosyltransferase (354 aa).

The active-site Proton acceptor is the E317.

It belongs to the CobT family. Homodimer.

The enzyme catalyses 5,6-dimethylbenzimidazole + nicotinate beta-D-ribonucleotide = alpha-ribazole 5'-phosphate + nicotinate + H(+). The protein operates within nucleoside biosynthesis; alpha-ribazole biosynthesis; alpha-ribazole from 5,6-dimethylbenzimidazole: step 1/2. Its function is as follows. Catalyzes the synthesis of alpha-ribazole-5'-phosphate from nicotinate mononucleotide (NAMN) and 5,6-dimethylbenzimidazole (DMB). The chain is Nicotinate-nucleotide--dimethylbenzimidazole phosphoribosyltransferase from Salmonella arizonae (strain ATCC BAA-731 / CDC346-86 / RSK2980).